The chain runs to 539 residues: Dihydrolipoyllysine-residue acetyltransferase component 3 of pyruvate dehydrogenase complex, mitochondrial (539 aa).

A mitochondrion-targeting transit peptide spans 1–102; it reads MAYASRIINH…SCLMQSARGF (102 aa). Residues 111 to 187 enclose the Lipoyl-binding domain; it reads HQEIGMPSLS…QVGEVIAITV (77 aa). Position 152 is an N6-lipoyllysine (K152). Positions 195 to 247 are disordered; sequence KFKDYTPSSTADAAPTKAEPTPAPPKEEKVKQPSSPPEPKASKPSTPPTGDRV. The span at 204 to 214 shows a compositional bias: low complexity; it reads TADAAPTKAEP. Residues 248 to 285 form the Peripheral subunit-binding (PSBD) domain; the sequence is FASPLARKLAEDNNVPLSDIEGTGPEGRIVKADIDEYL. Catalysis depends on residues H512 and D516.

Belongs to the 2-oxoacid dehydrogenase family. The cofactor is (R)-lipoate.

Its subcellular location is the mitochondrion matrix. The enzyme catalyses N(6)-[(R)-dihydrolipoyl]-L-lysyl-[protein] + acetyl-CoA = N(6)-[(R)-S(8)-acetyldihydrolipoyl]-L-lysyl-[protein] + CoA. Functionally, the pyruvate dehydrogenase complex catalyzes the overall conversion of pyruvate to acetyl-CoA and CO(2). It contains multiple copies of three enzymatic components: pyruvate dehydrogenase (E1), dihydrolipoamide acetyltransferase (E2) and lipoamide dehydrogenase (E3). The protein is Dihydrolipoyllysine-residue acetyltransferase component 3 of pyruvate dehydrogenase complex, mitochondrial of Arabidopsis thaliana (Mouse-ear cress).